The chain runs to 1203 residues: ATP-dependent helicase/nuclease subunit A (1203 aa).

One can recognise a UvrD-like helicase ATP-binding domain in the interval 4 to 472; it reads VKLTPEQNEA…IRLKENFRSR (469 aa). 25 to 32 is an ATP binding site; that stretch reads ASAGSGKT. The UvrD-like helicase C-terminal domain occupies 503–785; it reads VQGNISDYPV…RVMTFHKSKG (283 aa).

Belongs to the helicase family. AddA subfamily. As to quaternary structure, heterodimer of AddA and AddB/RexB. Mg(2+) serves as cofactor.

The enzyme catalyses Couples ATP hydrolysis with the unwinding of duplex DNA by translocating in the 3'-5' direction.. The catalysed reaction is ATP + H2O = ADP + phosphate + H(+). Functionally, the heterodimer acts as both an ATP-dependent DNA helicase and an ATP-dependent, dual-direction single-stranded exonuclease. Recognizes the chi site generating a DNA molecule suitable for the initiation of homologous recombination. The AddA nuclease domain is required for chi fragment generation; this subunit has the helicase and 3' -&gt; 5' nuclease activities. The polypeptide is ATP-dependent helicase/nuclease subunit A (Lactococcus lactis subsp. cremoris (strain SK11)).